The sequence spans 166 residues: Phosphopantetheine adenylyltransferase (166 aa).

Ser-9 provides a ligand contact to substrate. ATP is bound by residues 9–10 (SF) and His-17. Substrate contacts are provided by Lys-41, Thr-74, and Arg-88. Residues 89–91 (GLR), Glu-99, and 124–130 (DSFISSS) contribute to the ATP site.

Belongs to the bacterial CoaD family. In terms of assembly, homohexamer. Mg(2+) is required as a cofactor.

It localises to the cytoplasm. It carries out the reaction (R)-4'-phosphopantetheine + ATP + H(+) = 3'-dephospho-CoA + diphosphate. It functions in the pathway cofactor biosynthesis; coenzyme A biosynthesis; CoA from (R)-pantothenate: step 4/5. Reversibly transfers an adenylyl group from ATP to 4'-phosphopantetheine, yielding dephospho-CoA (dPCoA) and pyrophosphate. The chain is Phosphopantetheine adenylyltransferase from Lactobacillus gasseri (strain ATCC 33323 / DSM 20243 / BCRC 14619 / CIP 102991 / JCM 1131 / KCTC 3163 / NCIMB 11718 / NCTC 13722 / AM63).